The sequence spans 382 residues: Alkanesulfonate monooxygenase (382 aa).

It belongs to the SsuD family.

The catalysed reaction is an alkanesulfonate + FMNH2 + O2 = an aldehyde + FMN + sulfite + H2O + 2 H(+). Functionally, catalyzes the desulfonation of aliphatic sulfonates. The protein is Alkanesulfonate monooxygenase of Pseudomonas sp.